Reading from the N-terminus, the 456-residue chain is Putrescine--pyruvate aminotransferase (456 aa).

Tyr-156 lines the substrate pocket. Asp-262 serves as a coordination point for pyridoxal 5'-phosphate. N6-(pyridoxal phosphate)lysine is present on Lys-291. 2 residues coordinate substrate: Gly-322 and Arg-417.

It belongs to the class-III pyridoxal-phosphate-dependent aminotransferase family. Pyridoxal 5'-phosphate is required as a cofactor.

It catalyses the reaction putrescine + pyruvate = 4-aminobutanal + L-alanine. It participates in amine and polyamine degradation; putrescine degradation; 4-aminobutanal from putrescine (transaminase route). In terms of biological role, involved in the putrescine catabolism. Catalyzes the transfer of the amino group from putrescine to pyruvate to yield 4-aminobutanal and alanine. In Pseudomonas aeruginosa (strain ATCC 15692 / DSM 22644 / CIP 104116 / JCM 14847 / LMG 12228 / 1C / PRS 101 / PAO1), this protein is Putrescine--pyruvate aminotransferase.